A 1137-amino-acid polypeptide reads, in one-letter code: AP-4 complex subunit epsilon-1 (1137 aa).

A phosphoserine mark is found at S700 and S857. The tract at residues 727-1137 (SGALPVPQES…YQCQKVMEGS (411 aa)) is interaction with TEPSIN.

It belongs to the adaptor complexes large subunit family. As to quaternary structure, adaptor protein complex 4 (AP-4) is a heterotetramer composed of two large adaptins (epsilon-type subunit AP4E1 and beta-type subunit AP4B1), a medium adaptin (mu-type subunit AP4M1) and a small adaptin (sigma-type AP4S1). Interacts with TEPSIN. Interacts with GRIA2; probably indirect it mediates the somatodendritic localization of GRIA2 in neurons. In terms of tissue distribution, widely expressed.

Its subcellular location is the golgi apparatus. The protein localises to the trans-Golgi network membrane. Functionally, component of the adaptor protein complex 4 (AP-4). Adaptor protein complexes are vesicle coat components involved both in vesicle formation and cargo selection. They control the vesicular transport of proteins in different trafficking pathways. AP-4 forms a non clathrin-associated coat on vesicles departing the trans-Golgi network (TGN) and may be involved in the targeting of proteins from the trans-Golgi network (TGN) to the endosomal-lysosomal system. It is also involved in protein sorting to the basolateral membrane in epithelial cells and the proper asymmetric localization of somatodendritic proteins in neurons. AP-4 is involved in the recognition and binding of tyrosine-based sorting signals found in the cytoplasmic part of cargos, but may also recognize other types of sorting signal. This Homo sapiens (Human) protein is AP-4 complex subunit epsilon-1.